We begin with the raw amino-acid sequence, 343 residues long: Cilia- and flagella-associated protein 36 (343 aa).

Phosphoserine occurs at positions 85 and 147. A coiled-coil region spans residues 147 to 187 (SDLEQEEMKILREVLRKSKEEYDQEEERKRKKQSSEAKMEE). The disordered stretch occupies residues 165-188 (KEEYDQEEERKRKKQSSEAKMEEL). S201 is subject to Phosphoserine. 2 stretches are compositionally biased toward basic and acidic residues: residues 279–293 (QKRD…DTRT) and 301–323 (QKGK…AEEK). Positions 279 to 323 (QKRDKLLSMRKDTRTKQIQNTEQKGKPTREAEEMTEKPEMTAEEK) are disordered.

The protein belongs to the CFAP36 family. Interacts with ARL3.

The protein localises to the nucleus. It is found in the cytoplasm. Its subcellular location is the cell projection. It localises to the cilium. The protein resides in the flagellum. Functionally, may act as an effector for ARL3. The chain is Cilia- and flagella-associated protein 36 from Mus musculus (Mouse).